The following is a 239-amino-acid chain: Ribonuclease PH (239 aa).

Residues R86 and 124 to 126 (GTR) contribute to the phosphate site.

It belongs to the RNase PH family. As to quaternary structure, homohexameric ring arranged as a trimer of dimers.

The catalysed reaction is tRNA(n+1) + phosphate = tRNA(n) + a ribonucleoside 5'-diphosphate. Its function is as follows. Phosphorolytic 3'-5' exoribonuclease that plays an important role in tRNA 3'-end maturation. Removes nucleotide residues following the 3'-CCA terminus of tRNAs; can also add nucleotides to the ends of RNA molecules by using nucleoside diphosphates as substrates, but this may not be physiologically important. Probably plays a role in initiation of 16S rRNA degradation (leading to ribosome degradation) during starvation. The polypeptide is Ribonuclease PH (Rhizobium johnstonii (strain DSM 114642 / LMG 32736 / 3841) (Rhizobium leguminosarum bv. viciae)).